Consider the following 458-residue polypeptide: UDP-N-acetylmuramoylalanine--D-glutamate ligase (458 aa).

124-130 is a binding site for ATP; it reads GSDGKTT.

This sequence belongs to the MurCDEF family.

It is found in the cytoplasm. The catalysed reaction is UDP-N-acetyl-alpha-D-muramoyl-L-alanine + D-glutamate + ATP = UDP-N-acetyl-alpha-D-muramoyl-L-alanyl-D-glutamate + ADP + phosphate + H(+). The protein operates within cell wall biogenesis; peptidoglycan biosynthesis. In terms of biological role, cell wall formation. Catalyzes the addition of glutamate to the nucleotide precursor UDP-N-acetylmuramoyl-L-alanine (UMA). The protein is UDP-N-acetylmuramoylalanine--D-glutamate ligase of Clostridium beijerinckii (strain ATCC 51743 / NCIMB 8052) (Clostridium acetobutylicum).